The primary structure comprises 144 residues: Apidaecins type 22 (144 aa).

Positions 1-19 are cleaved as a signal peptide; the sequence is MKNFALAILVVTFVVAVFG. 4 consecutive propeptides follow at residues 20–42, 63–70, 91–98, and 119–126; these read NTNLDPPTRPTRLRREAEPEAEP and EAEPEAEP. Positions 20-144 are disordered; the sequence is NTNLDPPTRP…PQPRPPHPRI (125 aa). A compositionally biased stretch (pro residues) spans 134–144; it reads IPQPRPPHPRI.

The protein belongs to the apidaecin family.

Its subcellular location is the secreted. Its function is as follows. Apidaecins have bactericidal activity; predominantly against Gram-negative bacteria. They seem to interfere with cell propagation. The sequence is that of Apidaecins type 22 from Apis mellifera (Honeybee).